Here is a 190-residue protein sequence, read N- to C-terminus: Orotate phosphoribosyltransferase (190 aa).

114-122 contacts 5-phospho-alpha-D-ribose 1-diphosphate; the sequence is EDVITTGGS. Residues Thr118 and Arg146 each contribute to the orotate site.

Belongs to the purine/pyrimidine phosphoribosyltransferase family. PyrE subfamily. In terms of assembly, homodimer. The cofactor is Mg(2+).

It carries out the reaction orotidine 5'-phosphate + diphosphate = orotate + 5-phospho-alpha-D-ribose 1-diphosphate. It functions in the pathway pyrimidine metabolism; UMP biosynthesis via de novo pathway; UMP from orotate: step 1/2. Catalyzes the transfer of a ribosyl phosphate group from 5-phosphoribose 1-diphosphate to orotate, leading to the formation of orotidine monophosphate (OMP). This chain is Orotate phosphoribosyltransferase, found in Caldicellulosiruptor bescii (strain ATCC BAA-1888 / DSM 6725 / KCTC 15123 / Z-1320) (Anaerocellum thermophilum).